Here is a 488-residue protein sequence, read N- to C-terminus: Diacylglycerol O-acyltransferase 1 (488 aa).

The tract at residues 1 to 57 is disordered; sequence MGDRGSSRRRRTGSRPSSHGGGGPAAAEEEVRDAAAGPDVGAAGDAPAPAPNKDGDA. The Cytoplasmic segment spans residues 1–83; that stretch reads MGDRGSSRRR…SLFSSDSGFS (83 aa). An involved in homomerization region spans residues 1-91; the sequence is MGDRGSSRRR…FSNYRGILNW (91 aa). Residues Ser17 and Ser18 each carry the phosphoserine modification. Residues 34–47 show a composition bias toward low complexity; it reads AAAGPDVGAAGDAP. A helical transmembrane segment spans residues 84–118; the sequence is NYRGILNWCVVMLILSNARLFLENLIKYGILVDPI. Residues 119 to 130 are Lumenal-facing; the sequence is QVVSLFLKDPYS. Positions 119-130 are extracellular loop 1 (EL1); the sequence is QVVSLFLKDPYS. The helical transmembrane segment at 131-156 threads the bilayer; sequence WPAPCLVIAANVFAVAAFQVEKRLAV. Residues 131-488 are MBOAT fold; it reads WPAPCLVIAA…LNYEAPAAEA (358 aa). At 157–161 the chain is on the cytoplasmic side; the sequence is GALTE. Residues 162–184 traverse the membrane as a helical segment; sequence QAGLLLHVANLATILCFPAAVVL. The Lumenal segment spans residues 185 to 191; that stretch reads LVESITP. A helical membrane pass occupies residues 192-223; it reads VGSLLALMAHTILFLKLFSYRDVNSWCRRARA. Residues 224–273 lie on the Cytoplasmic side of the membrane; sequence KAASAGKKASSAAAPHTVSYPDNLTYRDLYYFLFAPTLCYELNFPRSPRI. An intracellular loop 1 (IL1) region spans residues 224–276; it reads KAASAGKKASSAAAPHTVSYPDNLTYRDLYYFLFAPTLCYELNFPRSPRIRKR. The helical transmembrane segment at 274-308 threads the bilayer; it reads RKRFLLRRILEMLFFTQLQVGLIQQWMVPTIQNSM. Over 309–315 the chain is Lumenal; sequence KPFKDMD. A helical transmembrane segment spans residues 316 to 353; that stretch reads YSRIIERLLKLAVPNHLIWLIFFYWLFHSCLNAVAELM. Residues 354–399 are Cytoplasmic-facing; that stretch reads QFGDREFYRDWWNSESVTYFWQNWNIPVHKWCIRHFYKPMLRRGSS. The interval 354–399 is intracellular loop 2 (IL2); the sequence is QFGDREFYRDWWNSESVTYFWQNWNIPVHKWCIRHFYKPMLRRGSS. An FYXDWWN motif motif is present at residues 360-366; the sequence is FYRDWWN. An acyl-CoA contacts are provided by residues 374–382, Tyr390, and Arg404; that span reads WQNWNIPVH. Residues 380–394 are amphipathic helix (AH); the sequence is PVHKWCIRHFYKPML. A helical transmembrane segment spans residues 400–420; the sequence is KWMARTGVFLASAFFHEYLVS. Residue His415 is part of the active site. Residues 421–428 are Lumenal-facing; the sequence is VPLRMFRL. Residues 429-447 form a helical membrane-spanning segment; that stretch reads WAFTGMMAQIPLAWFVGRF. Topologically, residues 448-449 are cytoplasmic; that stretch reads FQ. The helical transmembrane segment at 450–481 threads the bilayer; the sequence is GNYGNAAVWLSLIIGQPIAVLMYVHDYYVLNY. Tyr477 lines the an acyl-CoA pocket. Residues 482 to 488 lie on the Lumenal side of the membrane; that stretch reads EAPAAEA.

The protein belongs to the membrane-bound acyltransferase family. Sterol o-acyltransferase subfamily. As to quaternary structure, homodimer or homotetramer; both forms have similar enzymatic activities.

Its subcellular location is the endoplasmic reticulum membrane. It catalyses the reaction an acyl-CoA + a 1,2-diacyl-sn-glycerol = a triacyl-sn-glycerol + CoA. The enzyme catalyses all-trans-retinol + an acyl-CoA = an all-trans-retinyl ester + CoA. It carries out the reaction 2-(9Z-octadecenoyl)-glycerol + (9Z)-octadecenoyl-CoA = 1,2-di-(9Z-octadecenoyl)-sn-glycerol + CoA. The catalysed reaction is 1,2-di-(9Z-octadecenoyl)-sn-glycerol + (9Z)-octadecenoyl-CoA = 1,2,3-tri-(9Z-octadecenoyl)-glycerol + CoA. It catalyses the reaction all-trans-retinol + hexadecanoyl-CoA = all-trans-retinyl hexadecanoate + CoA. The enzyme catalyses 1-O-(9Z-octadecenyl)-glycerol + (9Z)-octadecenoyl-CoA = 1-O-(9Z-octadecyl)-3-(9Z-octadecenoyl)-glycerol + CoA. It carries out the reaction 1-O-(9Z-octadecyl)-3-(9Z-octadecenoyl)-glycerol + (9Z)-octadecenoyl-CoA = 1-O-(9Z-octadecenyl)-2,3-di-(9Z-octadecenoyl)glycerol + CoA. The catalysed reaction is 1-(9Z-octadecenoyl)-glycerol + (9Z)-octadecenoyl-CoA = 1,2-di-(9Z-octadecenoyl)-glycerol + CoA. It catalyses the reaction 1,2-di-(9Z-octadecenoyl)-glycerol + (9Z)-octadecenoate + H(+) = 1,2,3-tri-(9Z-octadecenoyl)-glycerol + H2O. The enzyme catalyses 1-octadecanoyl-2-(5Z,8Z,11Z,14Z-eicosatetraenoyl)-sn-glycerol + (9Z)-octadecenoyl-CoA = 1-octadecanoyl-2-(5Z,8Z,11Z,14Z)-eicosatetraenoyl-3-(9Z)-octadecenoyl-sn-glycerol + CoA. It carries out the reaction hexadecane-1,2-diol + 2 hexadecanoyl-CoA = 1,2-O,O-dihexadecanoyl-1,2-hexadecanediol + 2 CoA. The catalysed reaction is hexadecane-1,2-diol + hexadecanoyl-CoA = 2-hydroxyhexadecyl hexadecanoate + CoA. It catalyses the reaction 2-(9Z-octadecenoyl)-glycerol + hexadecanoyl-CoA = 1-hexadecanoyl-2-(9Z-octadecenoyl)-sn-glycerol + CoA. The enzyme catalyses 1,2-di-(9Z-octadecenoyl)-sn-glycerol + hexadecanoyl-CoA = 1,2-di-(9Z)-octadecenoyl-3-hexadecanoyl-sn-glycerol + CoA. It carries out the reaction hexadecan-1-ol + hexadecanoyl-CoA = hexadecanyl hexadecanoate + CoA. The catalysed reaction is 13-cis-retinol + hexadecanoyl-CoA = 13-cis-retinyl hexadecanoate + CoA. It catalyses the reaction 1,3-di-(9Z-octadecenoyl)-glycerol + (9Z)-octadecenoyl-CoA = 1,2,3-tri-(9Z-octadecenoyl)-glycerol + CoA. The enzyme catalyses 2,3-di-(9Z)-octadecenoyl-sn-glycerol + (9Z)-octadecenoyl-CoA = 1,2,3-tri-(9Z-octadecenoyl)-glycerol + CoA. It functions in the pathway lipid metabolism; glycerolipid metabolism. XP620 is a selective DGAT1 inhibitor. Catalyzes the terminal and only committed step in triacylglycerol synthesis by using diacylglycerol and fatty acyl CoA as substrates. Highly expressed in epithelial cells of the small intestine and its activity is essential for the absorption of dietary fats. In liver, plays a role in esterifying exogenous fatty acids to glycerol, and is required to synthesize fat for storage. Also present in female mammary glands, where it produces fat in the milk. May be involved in VLDL (very low density lipoprotein) assembly. In contrast to DGAT2 it is not essential for survival. Functions as the major acyl-CoA retinol acyltransferase (ARAT) in the skin, where it acts to maintain retinoid homeostasis and prevent retinoid toxicity leading to skin and hair disorders. Exhibits additional acyltransferase activities, includin acyl CoA:monoacylglycerol acyltransferase (MGAT), wax monoester and wax diester synthases. Also able to use 1-monoalkylglycerol (1-MAkG) as an acyl acceptor for the synthesis of monoalkyl-monoacylglycerol (MAMAG). The polypeptide is Diacylglycerol O-acyltransferase 1 (Homo sapiens (Human)).